Here is a 621-residue protein sequence, read N- to C-terminus: Rab11 family-interacting protein 4A (621 aa).

EF-hand domains follow at residues 14 to 49 (AFLKKLKEVFDVCDEDADGYIRVEHFVDLGLQFGQG) and 47 to 82 (GQGDEVKKFAKYLDPNAHGRINFKDFCHGVFAIKGC). Aspartate 27, aspartate 29, aspartate 31, tyrosine 33, histidine 38, aspartate 60, asparagine 62, arginine 66, and aspartate 71 together coordinate Ca(2+). 2 disordered regions span residues 132–172 (YSDE…KEEG) and 203–243 (DYGE…GQTP). The span at 151–161 (AADSGAGSESS) shows a compositional bias: low complexity. Over residues 162–172 (EGGRQDDKEEG) the composition is skewed to basic and acidic residues. Polar residues predominate over residues 225–243 (TNGFSDLGSSLPSSAGQTP). The stretch at 348-556 (DLKSKLKQEN…LNGQILSLSL (209 aa)) forms a coiled coil. One can recognise an FIP-RBD domain in the interval 558 to 620 (EAKNLFACHT…DHNPSILEIK (63 aa)).

In terms of assembly, homodimer. Forms a complex with Rab11 (rab11a or rab11b) and arf6. As to expression, isoform 1 is predominantly expressed in neural tissues. Isoform B is expressed ubiquitously. In the developing retina, it is expressed in progenitors throughout the retina at early stages and becomes restricted to the ganglion cell layer and ciliary marginal zone as differentiation proceeds.

It localises to the recycling endosome membrane. The protein resides in the cleavage furrow. The protein localises to the midbody. Its subcellular location is the cytoplasmic vesicle. Its function is as follows. Acts as a regulator of endocytic traffic by participating in membrane delivery. Required for the abscission step in cytokinesis, possibly by acting as an 'address tag' delivering recycling endosome membranes to the cleavage furrow during late cytokinesis. May play a role in differentiation during retinal development. This is Rab11 family-interacting protein 4A (rab11fip4a) from Danio rerio (Zebrafish).